The following is a 490-amino-acid chain: Betaine aldehyde dehydrogenase (490 aa).

D93 is a binding site for K(+). 150–152 contacts NAD(+); sequence GAW. Residue K162 is the Charge relay system of the active site. Position 176 to 179 (176 to 179) interacts with NAD(+); the sequence is KPSE. Residue V180 coordinates K(+). 230–233 is an NAD(+) binding site; it reads GIAS. L246 lines the K(+) pocket. E252 functions as the Proton acceptor in the catalytic mechanism. The NAD(+) site is built by G254, C286, and E387. Catalysis depends on C286, which acts as the Nucleophile. The residue at position 286 (C286) is a Cysteine sulfenic acid (-SOH). K(+) contacts are provided by K457 and G460. Catalysis depends on E464, which acts as the Charge relay system.

The protein belongs to the aldehyde dehydrogenase family. As to quaternary structure, dimer of dimers. It depends on K(+) as a cofactor.

The enzyme catalyses betaine aldehyde + NAD(+) + H2O = glycine betaine + NADH + 2 H(+). It participates in amine and polyamine biosynthesis; betaine biosynthesis via choline pathway; betaine from betaine aldehyde: step 1/1. Involved in the biosynthesis of the osmoprotectant glycine betaine. Catalyzes the irreversible oxidation of betaine aldehyde to the corresponding acid. In Yersinia pseudotuberculosis serotype I (strain IP32953), this protein is Betaine aldehyde dehydrogenase.